We begin with the raw amino-acid sequence, 738 residues long: NAD(P)H-quinone oxidoreductase subunit 5, chloroplastic (738 aa).

A run of 17 helical transmembrane segments spans residues 9–29, 39–59, 89–109, 125–145, 147–167, 185–205, 219–239, 258–278, 280–300, 327–347, 354–374, 396–416, 425–445, 542–562, 610–630, 691–711, and 717–737; these read WVIP…LFLI, IWAF…LHLS, VDPL…LVLI, FVYI…SNLI, IYFF…FWFT, GDFG…SLEF, NGIN…GAVA, TPIS…FLLA, LLPL…VGTI, LGYM…FHLI, ALLF…VGYS, TTFL…CFWS, WLYS…TAFY, LFPL…GIPF, SLAI…YSFF, GVID…GEEI, and GRIS…LFFI.

It belongs to the complex I subunit 5 family. As to quaternary structure, NDH is composed of at least 16 different subunits, 5 of which are encoded in the nucleus.

The protein localises to the plastid. The protein resides in the chloroplast thylakoid membrane. The enzyme catalyses a plastoquinone + NADH + (n+1) H(+)(in) = a plastoquinol + NAD(+) + n H(+)(out). The catalysed reaction is a plastoquinone + NADPH + (n+1) H(+)(in) = a plastoquinol + NADP(+) + n H(+)(out). Functionally, NDH shuttles electrons from NAD(P)H:plastoquinone, via FMN and iron-sulfur (Fe-S) centers, to quinones in the photosynthetic chain and possibly in a chloroplast respiratory chain. The immediate electron acceptor for the enzyme in this species is believed to be plastoquinone. Couples the redox reaction to proton translocation, and thus conserves the redox energy in a proton gradient. In Saccharum hybrid (Sugarcane), this protein is NAD(P)H-quinone oxidoreductase subunit 5, chloroplastic (ndhF).